The primary structure comprises 1254 residues: Unconventional myosin-VI (1254 aa).

In terms of domain architecture, Myosin N-terminal SH3-like spans 2–53 (EDGKPVWAPHPTDGFQVGNIVDIGPDSLTIEPLNQKGKTFLALINQVFPAEE). The Myosin motor domain occupies 57 to 772 (KDVEDNCSLM…KFAEFDQIMK (716 aa)). Position 151–158 (151–158 (GESGAGKT)) interacts with ATP. S267 bears the Phosphoserine mark. The responsible for slow ATPase activity stretch occupies residues 273-317 (YLNRGCTRYFANKETDKQILQNRKSPEYLKAGSLKDPLLDDHGDF). At T406 the chain carries Phosphothreonine. At S605 the chain carries Phosphoserine. The segment at 666-673 (FIRCIKPN) is actin-binding. The required for binding calmodulin stretch occupies residues 783–811 (KRVNHWLICSRWKKVQWCSLSVIKLKNKI). The region spanning 814 to 843 (RAEACIKMQKTIRMWLCKRRHKPRIDGLVK) is the IQ domain. A three-helix bundle region spans residues 836 to 917 (PRIDGLVKVG…AVLLSALQKK (82 aa)). The segment at 918–985 (KQQEEEAERL…EDDEKRIQAE (68 aa)) is SAH. Positions 935 to 956 (EKERKRREEDEQRRRKEEEERR) are disordered. S1026 bears the Phosphoserine mark. The tract at residues 1037 to 1245 (RGPAVQATKA…ESRQARPTYA (209 aa)) is interaction with TAX1BP1 and CALCOCO2/NDP52. The interval 1085–1087 (RRL) is interaction with OPTN. The interval 1096–1117 (KNKKRNTETEQRAPKSVTDYAQ) is disordered. Residues 1117–1245 (QQNPAVQLPA…ESRQARPTYA (129 aa)) form an interaction with TOM1 region.

Belongs to the TRAFAC class myosin-kinesin ATPase superfamily. Myosin family. Homodimer; dimerization seems to implicate the unfolding of the three-helix bundle region creating an additional calmodulin binding site, and cargo binding. Component of the DISP/DOCK7-induced septin displacement complex, at least composed of DOCK7, LRCH3 and MYO6. Able to function as a monomer under specific conditions in vitro. Forms a complex with CFTR and DAB2 in the apical membrane of epithelial cells. Binding to calmodulin through a unique insert, not found in other myosins, located in the neck region between the motor domain and the IQ domain appears to contribute to the directionality reversal. This interaction occurs only if the C-terminal lobe of calmodulin is occupied by calcium. Interaction with F-actin/ACTN1 occurs only at the apical brush border domain of the proximal tubule cells. Interacts with DAB2. In vitro, the C-terminal globular tail binds a C-terminal region of DAB2. Interacts with CFTR. Interacts with CABP5. Interacts (via residues 1117-1245) with TOM1 (via residues 392-463). Interacts (via residues 1060-1285) with OPTN. Interacts (via residues 1060-1285) with TAX1BP1 and CALCOCO2/NDP52. Interacts with TOM1L2. Interacts with CLIC5; may work together in a complex which also includes RDX and MYO6 to stabilize linkages between the plasma membrane and subjacent actin cytoskeleton at the base of stereocilia. In terms of processing, phosphorylation in the motor domain, induced by EGF, results in translocation of MYO6 from the cell surface to membrane ruffles and affects F-actin dynamics. Phosphorylated in vitro by p21-activated kinase (PAK). Expressed in all tissues examined including kidney cortex, intestinal mucosa, liver, lung, heart, jowl muscle, brain cortex and medulla, and in the epithelial cell line, LLC-PK1 (at protein level). In the kidney, located to the brush border of adult kidney proximal tubule cells.

The protein localises to the golgi apparatus. Its subcellular location is the trans-Golgi network membrane. The protein resides in the nucleus. It is found in the cytoplasm. It localises to the perinuclear region. The protein localises to the membrane. Its subcellular location is the clathrin-coated pit. The protein resides in the cytoplasmic vesicle. It is found in the clathrin-coated vesicle. It localises to the cell projection. The protein localises to the filopodium. Its subcellular location is the ruffle membrane. The protein resides in the microvillus. It is found in the cytosol. Myosins are actin-based motor molecules with ATPase activity. Unconventional myosins serve in intracellular movements. Myosin 6 is a reverse-direction motor protein that moves towards the minus-end of actin filaments. Has slow rate of actin-activated ADP release due to weak ATP binding. Functions in a variety of intracellular processes such as vesicular membrane trafficking and cell migration. Required for the structural integrity of the Golgi apparatus via the p53-dependent pro-survival pathway. Appears to be involved in a very early step of clathrin-mediated endocytosis in polarized epithelial cells. Together with TOM1, mediates delivery of endocytic cargo to autophagosomes thereby promoting autophagosome maturation and driving fusion with lysosomes. Links TOM1 with autophagy receptors, such as TAX1BP1; CALCOCO2/NDP52 and OPTN. May act as a regulator of F-actin dynamics. As part of the DISP complex, may regulate the association of septins with actin and thereby regulate the actin cytoskeleton. May play a role in transporting DAB2 from the plasma membrane to specific cellular targets. May play a role in the extension and network organization of neurites. Required for structural integrity of inner ear hair cells. Required for the correct localization of CLIC5 and RDX at the stereocilium base. Modulates RNA polymerase II-dependent transcription. This is Unconventional myosin-VI (MYO6) from Sus scrofa (Pig).